The sequence spans 129 residues: MSNVPAELKYSKEHEWLRKEAYGTYTVGITEHAQELLGDMVFVDLPEVGATVSAGDDCAVAESVKAASDIYAPVSGEIVAVNDALSDSPELVNSEPYAGGWIFKIKASDESELESLLDATAYEALLEDE.

Positions 24–106 (TYTVGITEHA…YAGGWIFKIK (83 aa)) constitute a Lipoyl-binding domain. Position 65 is an N6-lipoyllysine (lysine 65).

This sequence belongs to the GcvH family. In terms of assembly, the glycine cleavage system is composed of four proteins: P, T, L and H. (R)-lipoate serves as cofactor.

Functionally, the glycine cleavage system catalyzes the degradation of glycine. The H protein shuttles the methylamine group of glycine from the P protein to the T protein. The chain is Glycine cleavage system H protein from Escherichia coli O127:H6 (strain E2348/69 / EPEC).